The chain runs to 440 residues: Thymidine phosphorylase (440 aa).

This sequence belongs to the thymidine/pyrimidine-nucleoside phosphorylase family. In terms of assembly, homodimer.

The catalysed reaction is thymidine + phosphate = 2-deoxy-alpha-D-ribose 1-phosphate + thymine. It participates in pyrimidine metabolism; dTMP biosynthesis via salvage pathway; dTMP from thymine: step 1/2. Its function is as follows. The enzymes which catalyze the reversible phosphorolysis of pyrimidine nucleosides are involved in the degradation of these compounds and in their utilization as carbon and energy sources, or in the rescue of pyrimidine bases for nucleotide synthesis. In Shigella boydii serotype 4 (strain Sb227), this protein is Thymidine phosphorylase.